A 680-amino-acid polypeptide reads, in one-letter code: Fermitin family homolog 2 (680 aa).

Residues 40–81 (HIGGVMLKLVEKLDVKKDWSDHALWWEKKRTWLLKTHWTLDK) form an interaction with membranes containing phosphatidylinositol phosphate region. The disordered stretch occupies residues 141-162 (LKKPRDPTKKKKKKLDDQSEDE). Phosphoserine is present on residues Ser159, Ser181, Ser339, and Ser351. Residues 189–661 (MTPTYDAHDG…GYIFLSTRAK (473 aa)) enclose the FERM domain. Residues 380-476 (KVFKPKKLTL…WMAACRLASK (97 aa)) form the PH domain. Lys383 contributes to the a 1,2-diacyl-sn-glycero-3-phospho-(1D-myo-inositol-3,4,5-trisphosphate) binding site. Ser666 carries the post-translational modification Phosphoserine.

Belongs to the kindlin family. As to quaternary structure, interacts with ITGB1; the interaction is inhibited in presence of ITGB1BP1. Interacts with FBLIM1. Interacts with active, unphosphorylated CTNNB1. Identified in a complex with CTNNB1 and TCF7L2/TCF4. Interacts with ILK, ITGB1 and ITGB3. As to expression, detected in adult heart muscle (at protein level). Detected in heart, skeletal muscle and testis.

Its subcellular location is the cytoplasm. The protein localises to the cell cortex. It localises to the cytoskeleton. The protein resides in the stress fiber. It is found in the cell junction. Its subcellular location is the focal adhesion. The protein localises to the membrane. It localises to the cell projection. The protein resides in the lamellipodium membrane. It is found in the nucleus. Its subcellular location is the myofibril. The protein localises to the sarcomere. It localises to the i band. The protein resides in the cell surface. Scaffolding protein that enhances integrin activation mediated by TLN1 and/or TLN2, but activates integrins only weakly by itself. Binds to membranes enriched in phosphoinositides. Enhances integrin-mediated cell adhesion onto the extracellular matrix and cell spreading; this requires both its ability to interact with integrins and with phospholipid membranes. Required for the assembly of focal adhesions. Participates in the connection between extracellular matrix adhesion sites and the actin cytoskeleton and also in the orchestration of actin assembly and cell shape modulation. Recruits FBLIM1 to focal adhesions. Plays a role in the TGFB1 and integrin signaling pathways. Stabilizes active CTNNB1 and plays a role in the regulation of transcription mediated by CTNNB1 and TCF7L2/TCF4 and in Wnt signaling. The protein is Fermitin family homolog 2 (Fermt2) of Mus musculus (Mouse).